The chain runs to 413 residues: Serine hydroxymethyltransferase (413 aa).

Residues L116 and 120–122 (GHL) contribute to the (6S)-5,6,7,8-tetrahydrofolate site. K225 bears the N6-(pyridoxal phosphate)lysine mark. 349 to 351 (SPF) contributes to the (6S)-5,6,7,8-tetrahydrofolate binding site.

Belongs to the SHMT family. As to quaternary structure, homodimer. Requires pyridoxal 5'-phosphate as cofactor.

It is found in the cytoplasm. It catalyses the reaction (6R)-5,10-methylene-5,6,7,8-tetrahydrofolate + glycine + H2O = (6S)-5,6,7,8-tetrahydrofolate + L-serine. It participates in one-carbon metabolism; tetrahydrofolate interconversion. It functions in the pathway amino-acid biosynthesis; glycine biosynthesis; glycine from L-serine: step 1/1. Functionally, catalyzes the reversible interconversion of serine and glycine with tetrahydrofolate (THF) serving as the one-carbon carrier. This reaction serves as the major source of one-carbon groups required for the biosynthesis of purines, thymidylate, methionine, and other important biomolecules. Also exhibits THF-independent aldolase activity toward beta-hydroxyamino acids, producing glycine and aldehydes, via a retro-aldol mechanism. The chain is Serine hydroxymethyltransferase from Levilactobacillus brevis (strain ATCC 367 / BCRC 12310 / CIP 105137 / JCM 1170 / LMG 11437 / NCIMB 947 / NCTC 947) (Lactobacillus brevis).